A 352-amino-acid chain; its full sequence is Ketol-acid reductoisomerase (NAD(+)) (352 aa).

The KARI N-terminal Rossmann domain occupies Glu-11 to Thr-199. NAD(+) is bound by residues Tyr-38–Gln-41 and Asp-100–Gln-103. His-124 is a catalytic residue. Residue Gly-153 coordinates NAD(+). Positions Thr-200–Asn-347 constitute a KARI C-terminal knotted domain. Mg(2+) contacts are provided by Asp-208, Glu-212, Glu-244, and Glu-248. Substrate is bound at residue Ser-270.

This sequence belongs to the ketol-acid reductoisomerase family. The cofactor is Mg(2+).

It carries out the reaction (2R)-2,3-dihydroxy-3-methylbutanoate + NAD(+) = (2S)-2-acetolactate + NADH + H(+). The protein operates within amino-acid biosynthesis; L-isoleucine biosynthesis; L-isoleucine from 2-oxobutanoate: step 2/4. It participates in amino-acid biosynthesis; L-valine biosynthesis; L-valine from pyruvate: step 2/4. Functionally, involved in the biosynthesis of branched-chain amino acids (BCAA). Catalyzes an alkyl-migration followed by a ketol-acid reduction of (S)-2-acetolactate (S2AL) to yield (R)-2,3-dihydroxy-isovalerate. In the isomerase reaction, S2AL is rearranged via a Mg-dependent methyl migration to produce 3-hydroxy-3-methyl-2-ketobutyrate (HMKB). In the reductase reaction, this 2-ketoacid undergoes a metal-dependent reduction by NADH to yield (R)-2,3-dihydroxy-isovalerate. The sequence is that of Ketol-acid reductoisomerase (NAD(+)) from Desulfosudis oleivorans (strain DSM 6200 / JCM 39069 / Hxd3) (Desulfococcus oleovorans).